The sequence spans 332 residues: DNA-directed RNA polymerase subunit alpha (332 aa).

The alpha N-terminal domain (alpha-NTD) stretch occupies residues 1-231; it reads MQTNLLKPKT…EQLAVFAQLD (231 aa). The tract at residues 252–332 is alpha C-terminal domain (alpha-CTD); sequence FDPILLRPVD…NWPPAGLEKR (81 aa).

It belongs to the RNA polymerase alpha chain family. As to quaternary structure, homodimer. The RNAP catalytic core consists of 2 alpha, 1 beta, 1 beta' and 1 omega subunit. When a sigma factor is associated with the core the holoenzyme is formed, which can initiate transcription.

The enzyme catalyses RNA(n) + a ribonucleoside 5'-triphosphate = RNA(n+1) + diphosphate. Functionally, DNA-dependent RNA polymerase catalyzes the transcription of DNA into RNA using the four ribonucleoside triphosphates as substrates. The protein is DNA-directed RNA polymerase subunit alpha of Delftia acidovorans (strain DSM 14801 / SPH-1).